The following is a 70-amino-acid chain: MTKIVLKPGEPVEVAMRRFRRAILQTGLIVELKSRTAYEKPTTERKRKKKAAEARLRKRLRMQMLPKKLY.

The protein belongs to the bacterial ribosomal protein bS21 family.

The polypeptide is Small ribosomal subunit protein bS21 (Cupriavidus pinatubonensis (strain JMP 134 / LMG 1197) (Cupriavidus necator (strain JMP 134))).